The primary structure comprises 341 residues: tRNA N6-adenosine threonylcarbamoyltransferase (341 aa).

Fe cation contacts are provided by His115 and His119. Substrate contacts are provided by residues 137 to 141 (IVSGG), Asp170, Gly183, Asp187, and Asn276. Asp304 contributes to the Fe cation binding site.

This sequence belongs to the KAE1 / TsaD family. Fe(2+) serves as cofactor.

It is found in the cytoplasm. The enzyme catalyses L-threonylcarbamoyladenylate + adenosine(37) in tRNA = N(6)-L-threonylcarbamoyladenosine(37) in tRNA + AMP + H(+). Required for the formation of a threonylcarbamoyl group on adenosine at position 37 (t(6)A37) in tRNAs that read codons beginning with adenine. Is involved in the transfer of the threonylcarbamoyl moiety of threonylcarbamoyl-AMP (TC-AMP) to the N6 group of A37, together with TsaE and TsaB. TsaD likely plays a direct catalytic role in this reaction. This chain is tRNA N6-adenosine threonylcarbamoyltransferase, found in Staphylococcus aureus (strain JH1).